A 594-amino-acid chain; its full sequence is Protein FAM200C (594 aa).

The chain is Protein FAM200C (FAM200C) from Bos taurus (Bovine).